Consider the following 1728-residue polypeptide: Protein NETWORKED 1A (1728 aa).

Residues 13–92 (YSWWWDSHIP…ERYDHATVEL (80 aa)) form the NAB domain. 7 coiled-coil regions span residues 155-446 (LGNS…LEIE), 476-827 (MLRD…QVEI), 857-885 (FSEK…EIDN), 954-1016 (QFQS…AELQ), 1090-1323 (EQAE…KETV), 1403-1431 (LLQD…LRRR), and 1576-1684 (RRLA…TKSK). The interval 1419 to 1441 (AEEKKRRGKLRRRSSSHRSKDRK) is disordered. A compositionally biased stretch (basic residues) spans 1424–1439 (RRGKLRRRSSSHRSKD).

The protein belongs to the NET family. Interacts with F-actin. As to expression, expressed in root meristems and at very low levels throughout mature vasculature.

Its subcellular location is the cytoplasm. It localises to the cytoskeleton. It is found in the cell membrane. The protein resides in the cell junction. The protein localises to the plasmodesma. Its function is as follows. Plant-specific actin binding protein. Associates with F-actin at the plasma membrane and plasmodesmata. May be part of a membrane-cytoskeletal adapter complex. This is Protein NETWORKED 1A from Arabidopsis thaliana (Mouse-ear cress).